We begin with the raw amino-acid sequence, 231 residues long: Uracil phosphoribosyltransferase (231 aa).

38–42 (KGLVR) serves as a coordination point for GTP. Residues Arg87, Arg112, and 140 to 148 (DPMIATGST) each bind 5-phospho-alpha-D-ribose 1-diphosphate. Uracil is bound by residues Ile203 and 208 to 210 (GDA). Residue Asp209 participates in 5-phospho-alpha-D-ribose 1-diphosphate binding.

Belongs to the UPRTase family. It depends on Mg(2+) as a cofactor.

The enzyme catalyses UMP + diphosphate = 5-phospho-alpha-D-ribose 1-diphosphate + uracil. The protein operates within pyrimidine metabolism; UMP biosynthesis via salvage pathway; UMP from uracil: step 1/1. Its activity is regulated as follows. Allosterically activated by GTP. In terms of biological role, catalyzes the conversion of uracil and 5-phospho-alpha-D-ribose 1-diphosphate (PRPP) to UMP and diphosphate. The chain is Uracil phosphoribosyltransferase from Methanococcus maripaludis (strain C5 / ATCC BAA-1333).